We begin with the raw amino-acid sequence, 358 residues long: Peptide chain release factor 1 (358 aa).

N5-methylglutamine is present on Gln-233.

This sequence belongs to the prokaryotic/mitochondrial release factor family. Methylated by PrmC. Methylation increases the termination efficiency of RF1.

It localises to the cytoplasm. Its function is as follows. Peptide chain release factor 1 directs the termination of translation in response to the peptide chain termination codons UAG and UAA. This chain is Peptide chain release factor 1, found in Blochmanniella floridana.